Consider the following 185-residue polypeptide: Ribosome-recycling factor (185 aa).

This sequence belongs to the RRF family.

The protein resides in the cytoplasm. Functionally, responsible for the release of ribosomes from messenger RNA at the termination of protein biosynthesis. May increase the efficiency of translation by recycling ribosomes from one round of translation to another. In Thermomicrobium roseum (strain ATCC 27502 / DSM 5159 / P-2), this protein is Ribosome-recycling factor.